The sequence spans 834 residues: DNA gyrase subunit A (834 aa).

Positions 53–520 (LPDVRDGLKP…NDTEIDEEDL (468 aa)) constitute a Topo IIA-type catalytic domain. The active-site O-(5'-phospho-DNA)-tyrosine intermediate is Y141. Positions 547 to 553 (QGRGGVG) match the GyrA-box motif.

It belongs to the type II topoisomerase GyrA/ParC subunit family. As to quaternary structure, heterotetramer, composed of two GyrA and two GyrB chains. In the heterotetramer, GyrA contains the active site tyrosine that forms a transient covalent intermediate with DNA, while GyrB binds cofactors and catalyzes ATP hydrolysis.

It is found in the cytoplasm. The catalysed reaction is ATP-dependent breakage, passage and rejoining of double-stranded DNA.. A type II topoisomerase that negatively supercoils closed circular double-stranded (ds) DNA in an ATP-dependent manner to modulate DNA topology and maintain chromosomes in an underwound state. Negative supercoiling favors strand separation, and DNA replication, transcription, recombination and repair, all of which involve strand separation. Also able to catalyze the interconversion of other topological isomers of dsDNA rings, including catenanes and knotted rings. Type II topoisomerases break and join 2 DNA strands simultaneously in an ATP-dependent manner. This Brachyspira hyodysenteriae (strain ATCC 49526 / WA1) protein is DNA gyrase subunit A.